Consider the following 297-residue polypeptide: Acetylglutamate kinase (297 aa).

Substrate-binding positions include 68-69 (GG), arginine 90, and asparagine 195.

Belongs to the acetylglutamate kinase family. ArgB subfamily.

It is found in the cytoplasm. It carries out the reaction N-acetyl-L-glutamate + ATP = N-acetyl-L-glutamyl 5-phosphate + ADP. It functions in the pathway amino-acid biosynthesis; L-arginine biosynthesis; N(2)-acetyl-L-ornithine from L-glutamate: step 2/4. Functionally, catalyzes the ATP-dependent phosphorylation of N-acetyl-L-glutamate. The polypeptide is Acetylglutamate kinase (Mesorhizobium japonicum (strain LMG 29417 / CECT 9101 / MAFF 303099) (Mesorhizobium loti (strain MAFF 303099))).